The sequence spans 449 residues: Bifunctional protein GlmU (449 aa).

Residues 1–228 (MSTALVILAA…EAETLGINSR (228 aa)) are pyrophosphorylase. Residues 8 to 11 (LAAG), Lys22, Gln75, 80 to 81 (GT), 103 to 105 (YGD), Gly140, Glu154, Asn169, and Asn226 each bind UDP-N-acetyl-alpha-D-glucosamine. Residue Asp105 coordinates Mg(2+). Asn226 serves as a coordination point for Mg(2+). Residues 229 to 249 (ADLAAAEAVFQAHARAELLDI) are linker. The segment at 250–449 (GVTLTAPETV…RAKKAAKAKG (200 aa)) is N-acetyltransferase. Positions 315 and 333 each coordinate UDP-N-acetyl-alpha-D-glucosamine. The Proton acceptor role is filled by His345. Tyr348 and Asn359 together coordinate UDP-N-acetyl-alpha-D-glucosamine. Residues Ala362, 368–369 (NY), Ser387, Thr405, and Arg422 each bind acetyl-CoA.

The protein in the N-terminal section; belongs to the N-acetylglucosamine-1-phosphate uridyltransferase family. This sequence in the C-terminal section; belongs to the transferase hexapeptide repeat family. As to quaternary structure, homotrimer. The cofactor is Mg(2+).

The protein resides in the cytoplasm. The enzyme catalyses alpha-D-glucosamine 1-phosphate + acetyl-CoA = N-acetyl-alpha-D-glucosamine 1-phosphate + CoA + H(+). It carries out the reaction N-acetyl-alpha-D-glucosamine 1-phosphate + UTP + H(+) = UDP-N-acetyl-alpha-D-glucosamine + diphosphate. It functions in the pathway nucleotide-sugar biosynthesis; UDP-N-acetyl-alpha-D-glucosamine biosynthesis; N-acetyl-alpha-D-glucosamine 1-phosphate from alpha-D-glucosamine 6-phosphate (route II): step 2/2. Its pathway is nucleotide-sugar biosynthesis; UDP-N-acetyl-alpha-D-glucosamine biosynthesis; UDP-N-acetyl-alpha-D-glucosamine from N-acetyl-alpha-D-glucosamine 1-phosphate: step 1/1. It participates in bacterial outer membrane biogenesis; LPS lipid A biosynthesis. In terms of biological role, catalyzes the last two sequential reactions in the de novo biosynthetic pathway for UDP-N-acetylglucosamine (UDP-GlcNAc). The C-terminal domain catalyzes the transfer of acetyl group from acetyl coenzyme A to glucosamine-1-phosphate (GlcN-1-P) to produce N-acetylglucosamine-1-phosphate (GlcNAc-1-P), which is converted into UDP-GlcNAc by the transfer of uridine 5-monophosphate (from uridine 5-triphosphate), a reaction catalyzed by the N-terminal domain. The chain is Bifunctional protein GlmU from Ruegeria sp. (strain TM1040) (Silicibacter sp.).